A 362-amino-acid chain; its full sequence is Apelin receptor A (362 aa).

Over 1–34 (MEPTSEYTETYDYYDTGYNDSGCDYSEWEPSYSL) the chain is Extracellular. An N-linked (GlcNAc...) asparagine glycan is attached at N19. Cystine bridges form between C23–C286 and C105–C184. Residues 35 to 55 (IPVLYMLIFILGLSGNGVVIF) traverse the membrane as a helical segment. Topologically, residues 56-73 (TVWRAKSKRRAADVYIGN) are cytoplasmic. Residues 74–94 (LALADLTFVITLPLWAVYTAL) form a helical membrane-spanning segment. At 95 to 106 (GYHWPFGVALCK) the chain is on the extracellular side. The helical transmembrane segment at 107-127 (ISSYVVLVNMYASVFCLTCLS) threads the bilayer. Over 128 to 149 (FDRYLAIVHSLSSGRLRSRATM) the chain is Cytoplasmic. A helical transmembrane segment spans residues 150 to 170 (LASLGAIWFLSCLLAVPTLLF). Over 171 to 211 (RTTVDDTGSNRTTCAMDFSLVTLNQDHESLWIAGLSLSSSA) the chain is Extracellular. N-linked (GlcNAc...) asparagine glycosylation is present at N180. The chain crosses the membrane as a helical span at residues 212–232 (LGFLLPFLAMTVCYCFIGCTV). The Cytoplasmic portion of the chain corresponds to 233–248 (TRHFSHLRKEDQKKRR). Residues 249–269 (LLKIITTLVVVFAFCWTPFHV) traverse the membrane as a helical segment. The Extracellular segment spans residues 270-284 (LKSMDALSYLDLAPN). Residues 285 to 305 (SCGFLHFLLLAHPYATCLAYV) traverse the membrane as a helical segment. Residues 306-362 (NSCLNPFLYAFFDLRFRSQCLCLLNLKKAMHGHMSSMSSTLSAQTQKSEVQSLATKV) are Cytoplasmic-facing.

Belongs to the G-protein coupled receptor 1 family. In terms of tissue distribution, first expressed before epiboly in dorsal precursors. During epiboly, expressed in the enveloping layer, yolk syncytial layer and migrating mesendoderm. During segmentation stages, expressed in epithelial structures such as adaxial cells, border cells of the newly formed somites, developing lens, otic vesicles and venous vasculature.

The protein resides in the cell membrane. Its function is as follows. G protein-coupled receptor for peptide hormones apelin (apln) and apelin receptor early endogenous ligand (apela), that plays a role in the regulation of normal cardiovascular function and fluid homeostasis. When acting as apelin receptor, activates both G(i) protein pathway that inhibits adenylate cyclase activity, and the beta-arrestin pathway that promotes internalization of the receptor. Also functions as mechanoreceptor that is activated by pathological stimuli in a G-protein-independent fashion to induce beta-arrestin signaling, hence eliciting cardiac hypertrophy. However, the presence of apelin ligand blunts cardiac hypertrophic induction from APLNR/APJ on response to pathological stimuli. Plays a key role in early development such as gastrulation, blood vessels formation and heart morphogenesis by acting as a receptor for apela hormone, promoting endoderm and mesendoderm cell migration and regulating the migration of cells fated to become myocardial progenitors, respectively. Positively regulates angioblast migration toward the embryonic midline, i.e. the position of the future vessel formation, during vasculogenesis. May promote sinus venosus (SV)-derived endothelial cells migration into the developing heart to promote coronary blood vessel development. Required for cardiovascular development, particularly for intersomitic vein angiogenesis by acting as a receptor for apln hormone. Also plays a role in various processes in adults such as regulation of blood vessel formation, blood pressure, heart contractility, and heart failure. Acts redundantly with agtrl1b in heart development. This is Apelin receptor A (aplnra) from Danio rerio (Zebrafish).